The following is a 470-amino-acid chain: Neuraminidase (470 aa).

The Intravirion portion of the chain corresponds to 1-6 (MNPNQK). A helical transmembrane segment spans residues 7–27 (IITIGSICMAIGIISLILQIG). The tract at residues 11 to 33 (GSICMAIGIISLILQIGNIISIW) is involved in apical transport and lipid raft association. The Virion surface portion of the chain corresponds to 28–470 (NIISIWVSHS…GAELPFTIDK (443 aa)). A hypervariable stalk region region spans residues 36–90 (HSIQTGSQNHTGICNQRIITYENSTWVNQTYVNISNTNVVAGKDTTSMTLAGNSS). Residues N44, N58, N63, N68, and N88 are each glycosylated (N-linked (GlcNAc...) asparagine; by host). Residues 91-470 (LCPIRGWAIY…GAELPFTIDK (380 aa)) are head of neuraminidase. Intrachain disulfides connect C92-C417, C124-C129, C184-C231, C233-C238, C279-C292, C281-C290, C318-C335, and C421-C447. Residue R118 coordinates substrate. N146 carries an N-linked (GlcNAc...) asparagine; by host glycan. The active-site Proton donor/acceptor is the D151. R152 contributes to the substrate binding site. N235 carries N-linked (GlcNAc...) asparagine; by host glycosylation. 277–278 (EE) is a binding site for substrate. An N-linked (GlcNAc...) asparagine; by host glycan is attached at N285. R293 is a binding site for substrate. Ca(2+)-binding residues include D294, G298, and D324. N365 is a glycosylation site (N-linked (GlcNAc...) asparagine; by host). Residue R368 participates in substrate binding. Y402 serves as the catalytic Nucleophile. N-linked (GlcNAc...) asparagine; by host glycosylation is present at N455.

It belongs to the glycosyl hydrolase 34 family. In terms of assembly, homotetramer. The cofactor is Ca(2+). Post-translationally, N-glycosylated.

It is found in the virion membrane. It localises to the host apical cell membrane. The enzyme catalyses Hydrolysis of alpha-(2-&gt;3)-, alpha-(2-&gt;6)-, alpha-(2-&gt;8)- glycosidic linkages of terminal sialic acid residues in oligosaccharides, glycoproteins, glycolipids, colominic acid and synthetic substrates.. Its activity is regulated as follows. Inhibited by the neuraminidase inhibitors zanamivir (Relenza) and oseltamivir (Tamiflu). These drugs interfere with the release of progeny virus from infected cells and are effective against all influenza strains. Resistance to neuraminidase inhibitors is quite rare. Catalyzes the removal of terminal sialic acid residues from viral and cellular glycoconjugates. Cleaves off the terminal sialic acids on the glycosylated HA during virus budding to facilitate virus release. Additionally helps virus spread through the circulation by further removing sialic acids from the cell surface. These cleavages prevent self-aggregation and ensure the efficient spread of the progeny virus from cell to cell. Otherwise, infection would be limited to one round of replication. Described as a receptor-destroying enzyme because it cleaves a terminal sialic acid from the cellular receptors. May facilitate viral invasion of the upper airways by cleaving the sialic acid moieties on the mucin of the airway epithelial cells. Likely to plays a role in the budding process through its association with lipid rafts during intracellular transport. May additionally display a raft-association independent effect on budding. Plays a role in the determination of host range restriction on replication and virulence. Sialidase activity in late endosome/lysosome traffic seems to enhance virus replication. This Influenza A virus (strain A/Kiev/59/1979 H1N1) protein is Neuraminidase.